The chain runs to 161 residues: Bifurcating [FeFe] hydrogenase gamma subunit (161 aa).

The [2Fe-2S] cluster site is built by cysteine 78, cysteine 83, cysteine 119, and cysteine 123.

Belongs to the complex I 24 kDa subunit family. As to quaternary structure, heterotrimer composed of HydA (alpha subunit), HydB (beta subunit) and HydC (gamma subunit). Near neutral and acidic pH conditions favor oligomerization of the heterotrimeric holoenzyme. Requires [2Fe-2S] cluster as cofactor.

The protein localises to the cytoplasm. The enzyme catalyses 2 H2 + 2 oxidized [2Fe-2S]-[ferredoxin] + NAD(+) = 2 reduced [2Fe-2S]-[ferredoxin] + NADH + 3 H(+). Catalyzes the oxidation of the physiological electron carriers NADH and reduced ferredoxin, coupled to the production of H(2). Acts as a bifurcating [FeFe] hydrogenase, which uses the exergonic oxidation of reduced ferredoxin to drive the unfavorable oxidation of NADH to produce H(2). The gamma subunit might be the site where reduced ferredoxin is oxidized. This is Bifurcating [FeFe] hydrogenase gamma subunit from Thermotoga maritima (strain ATCC 43589 / DSM 3109 / JCM 10099 / NBRC 100826 / MSB8).